Here is a 520-residue protein sequence, read N- to C-terminus: GMP synthase [glutamine-hydrolyzing] (520 aa).

The Glutamine amidotransferase type-1 domain occupies 9-202 (TILIIDFGSQ…VHRIVGVKPG (194 aa)). The active-site Nucleophile is the C86. Catalysis depends on residues H176 and E178. The 193-residue stretch at 203 to 395 (WTMGAYREQA…LGLPDSFIGR (193 aa)) folds into the GMPS ATP-PPase domain. 230-236 (SGGVDSS) provides a ligand contact to ATP.

As to quaternary structure, homodimer.

The catalysed reaction is XMP + L-glutamine + ATP + H2O = GMP + L-glutamate + AMP + diphosphate + 2 H(+). It functions in the pathway purine metabolism; GMP biosynthesis; GMP from XMP (L-Gln route): step 1/1. Catalyzes the synthesis of GMP from XMP. The protein is GMP synthase [glutamine-hydrolyzing] of Brucella canis (strain ATCC 23365 / NCTC 10854 / RM-666).